Here is a 189-residue protein sequence, read N- to C-terminus: dTTP/UTP pyrophosphatase (189 aa).

D70 serves as the catalytic Proton acceptor. A disulfide bridge connects residues C74 and C79.

It belongs to the Maf family. YhdE subfamily. As to quaternary structure, homodimer. A divalent metal cation is required as a cofactor.

It localises to the cytoplasm. It carries out the reaction dTTP + H2O = dTMP + diphosphate + H(+). It catalyses the reaction UTP + H2O = UMP + diphosphate + H(+). The enzyme catalyses CTP + H2O = CMP + diphosphate + H(+). The catalysed reaction is psi-UTP + H2O = psi-UMP + diphosphate + H(+). It carries out the reaction 5-methyl-CTP + H2O = 5-methyl-CMP + diphosphate + H(+). It catalyses the reaction 5-methyl-UTP + H2O = 5-methyl-UMP + diphosphate + H(+). Nucleoside triphosphate pyrophosphatase that hydrolyzes dTTP and UTP. Can also hydrolyze CTP and the modified nucleotides pseudo-UTP, 5-methyl-CTP (m(5)CTP) and 5-methyl-UTP (m(5)UTP). May have a dual role in cell division arrest and in preventing the incorporation of modified nucleotides into cellular nucleic acids. In Bacillus subtilis (strain 168), this protein is dTTP/UTP pyrophosphatase.